The following is a 266-amino-acid chain: Undecaprenyl-diphosphatase (266 aa).

Helical transmembrane passes span 4 to 24 (LATIILLGIIEGLTEFLPVSS), 41 to 61 (GSAAFKIAIQLGAILAVLVAY), 79 to 99 (AVAFTRNILIGFLPAMLVGAV), 108 to 128 (LESPATVAVALLVGGIAILAI), 143 to 163 (MPLRTAIAIGAVQCIAMIPGV), 184 to 204 (AEFSFFLAVPTMMGATAYSLW), 220 to 240 (IGLFVAFLVALVVVKAFVAIV), and 243 to 263 (FGFAPFAWYRIIVGGGALLWL).

It belongs to the UppP family.

It localises to the cell inner membrane. The enzyme catalyses di-trans,octa-cis-undecaprenyl diphosphate + H2O = di-trans,octa-cis-undecaprenyl phosphate + phosphate + H(+). Functionally, catalyzes the dephosphorylation of undecaprenyl diphosphate (UPP). Confers resistance to bacitracin. The polypeptide is Undecaprenyl-diphosphatase (Sphingopyxis alaskensis (strain DSM 13593 / LMG 18877 / RB2256) (Sphingomonas alaskensis)).